The primary structure comprises 495 residues: Glutamate--tRNA ligase (495 aa).

The 'HIGH' region motif lies at 12–22 (PSPTGHLHIGN). Positions 259 to 263 (KLSKR) match the 'KMSKS' region motif. An ATP-binding site is contributed by lysine 262.

It belongs to the class-I aminoacyl-tRNA synthetase family. Glutamate--tRNA ligase type 1 subfamily. In terms of assembly, monomer.

The protein localises to the cytoplasm. The catalysed reaction is tRNA(Glu) + L-glutamate + ATP = L-glutamyl-tRNA(Glu) + AMP + diphosphate. In terms of biological role, catalyzes the attachment of glutamate to tRNA(Glu) in a two-step reaction: glutamate is first activated by ATP to form Glu-AMP and then transferred to the acceptor end of tRNA(Glu). This chain is Glutamate--tRNA ligase, found in Latilactobacillus sakei subsp. sakei (strain 23K) (Lactobacillus sakei subsp. sakei).